Reading from the N-terminus, the 198-residue chain is Anthranilate synthase component 2 (198 aa).

The Glutamine amidotransferase type-1 domain occupies 2–198 (LLMMIDNYDS…NFLKQTGGRR (197 aa)). 53–55 (GPC) contributes to the L-glutamine binding site. The Nucleophile; for GATase activity role is filled by cysteine 80. Residues glutamine 84 and 130–131 (SL) contribute to the L-glutamine site. Catalysis depends on for GATase activity residues histidine 174 and glutamate 176.

As to quaternary structure, heterotetramer consisting of two non-identical subunits: a beta subunit (TrpG) and a large alpha subunit (TrpE).

The catalysed reaction is chorismate + L-glutamine = anthranilate + pyruvate + L-glutamate + H(+). The protein operates within amino-acid biosynthesis; L-tryptophan biosynthesis; L-tryptophan from chorismate: step 1/5. In terms of biological role, part of a heterotetrameric complex that catalyzes the two-step biosynthesis of anthranilate, an intermediate in the biosynthesis of L-tryptophan. In the first step, the glutamine-binding beta subunit (TrpG) of anthranilate synthase (AS) provides the glutamine amidotransferase activity which generates ammonia as a substrate that, along with chorismate, is used in the second step, catalyzed by the large alpha subunit of AS (TrpE) to produce anthranilate. In the absence of TrpG, TrpE can synthesize anthranilate directly from chorismate and high concentrations of ammonia. The sequence is that of Anthranilate synthase component 2 (trpG) from Pseudomonas putida (Arthrobacter siderocapsulatus).